Reading from the N-terminus, the 416-residue chain is Glutamyl-tRNA reductase (416 aa).

Residues 49–52 (TCNR), Ser-105, 110–112 (EPQ), and Gln-116 each bind substrate. The active-site Nucleophile is Cys-50. NADP(+) is bound at residue 185 to 190 (GAGETI).

Belongs to the glutamyl-tRNA reductase family. As to quaternary structure, homodimer.

It carries out the reaction (S)-4-amino-5-oxopentanoate + tRNA(Glu) + NADP(+) = L-glutamyl-tRNA(Glu) + NADPH + H(+). The protein operates within porphyrin-containing compound metabolism; protoporphyrin-IX biosynthesis; 5-aminolevulinate from L-glutamyl-tRNA(Glu): step 1/2. Functionally, catalyzes the NADPH-dependent reduction of glutamyl-tRNA(Glu) to glutamate 1-semialdehyde (GSA). The polypeptide is Glutamyl-tRNA reductase (Shewanella pealeana (strain ATCC 700345 / ANG-SQ1)).